A 206-amino-acid chain; its full sequence is Ribosomal RNA small subunit methyltransferase G (206 aa).

Residues Gly-71, Phe-76, 125 to 126 (IE), and Arg-139 each bind S-adenosyl-L-methionine.

Belongs to the methyltransferase superfamily. RNA methyltransferase RsmG family.

The protein resides in the cytoplasm. It catalyses the reaction guanosine(527) in 16S rRNA + S-adenosyl-L-methionine = N(7)-methylguanosine(527) in 16S rRNA + S-adenosyl-L-homocysteine. Functionally, specifically methylates the N7 position of guanine in position 527 of 16S rRNA. The polypeptide is Ribosomal RNA small subunit methyltransferase G (Cereibacter sphaeroides (strain ATCC 17023 / DSM 158 / JCM 6121 / CCUG 31486 / LMG 2827 / NBRC 12203 / NCIMB 8253 / ATH 2.4.1.) (Rhodobacter sphaeroides)).